Reading from the N-terminus, the 222-residue chain is MNEELSAFFDVPVGTMMLAIAFPAILLPTPNRLITNRWITIQQWLVKLIMKQLLSIHNTKGLSWSLMLITLTLFIGLTNLLGLLPYSFAPTAQLTVNLSMAIPLWTGTVILGFRYKTKISLAHLLPQGTPTFLIPMIIIIETISLLIRPVTLAVRLTANITAGHLLIHLTGTAALTLLSIHSMTITVTFITVVVLTILELAVALIQAYVFALLISLYLHESA.

Helical transmembrane passes span 7–27 (AFFD…AILL), 64–84 (WSLM…LGLL), 93–113 (QLTV…ILGF), 132–152 (FLIP…PVTL), 160–180 (ITAG…LLSI), and 185–205 (ITVT…VALI).

Belongs to the ATPase A chain family. In terms of assembly, component of the ATP synthase complex composed at least of ATP5F1A/subunit alpha, ATP5F1B/subunit beta, ATP5MC1/subunit c (homooctomer), MT-ATP6/subunit a, MT-ATP8/subunit 8, ATP5ME/subunit e, ATP5MF/subunit f, ATP5MG/subunit g, ATP5MK/subunit k, ATP5MJ/subunit j, ATP5F1C/subunit gamma, ATP5F1D/subunit delta, ATP5F1E/subunit epsilon, ATP5PF/subunit F6, ATP5PB/subunit b, ATP5PD/subunit d, ATP5PO/subunit OSCP. ATP synthase complex consists of a soluble F(1) head domain (subunits alpha(3) and beta(3)) - the catalytic core - and a membrane F(0) domain - the membrane proton channel (subunits c, a, 8, e, f, g, k and j). These two domains are linked by a central stalk (subunits gamma, delta, and epsilon) rotating inside the F1 region and a stationary peripheral stalk (subunits F6, b, d, and OSCP). Interacts with DNAJC30; interaction is direct.

Its subcellular location is the mitochondrion inner membrane. The catalysed reaction is H(+)(in) = H(+)(out). Functionally, subunit a, of the mitochondrial membrane ATP synthase complex (F(1)F(0) ATP synthase or Complex V) that produces ATP from ADP in the presence of a proton gradient across the membrane which is generated by electron transport complexes of the respiratory chain. ATP synthase complex consist of a soluble F(1) head domain - the catalytic core - and a membrane F(1) domain - the membrane proton channel. These two domains are linked by a central stalk rotating inside the F(1) region and a stationary peripheral stalk. During catalysis, ATP synthesis in the catalytic domain of F(1) is coupled via a rotary mechanism of the central stalk subunits to proton translocation. With the subunit c (ATP5MC1), forms the proton-conducting channel in the F(0) domain, that contains two crucial half-channels (inlet and outlet) that facilitate proton movement from the mitochondrial intermembrane space (IMS) into the matrix. Protons are taken up via the inlet half-channel and released through the outlet half-channel, following a Grotthuss mechanism. In Mammuthus primigenius (Siberian woolly mammoth), this protein is ATP synthase F(0) complex subunit a.